A 396-amino-acid chain; its full sequence is ASTKGPSVFPLAPCSRSTSESTAALGCLVKDYFPEPVTVSWNSGALTSGVHTFPAVLQSSGLYSLSSVVTVPSSSLGTKTYTCNVDHKPSNTKVDKRVESKYGPPCPSCPAPEFLGGPSVFLFPPKPKDTLMISRTPEVTCVVVDVSQEDPEVQFNWYVDGVEVHNAKTKPREEQFNSTYRVVSVLTVLHQDWLNGKEYKCKVSNKGLPSSIEKTISKAKGQPREPQVYTLPPSQEEMTKNQVSLTCLVKGFYPSDIAVEWESNGQPENNYKTTPPVLDSDGSFFLYSRLTVDKSRWQEGNVFSCSVMHEALHNHYTQKSLSLSLELQLEESCAEAQDGELDGLWTTITIFITLFLLSVCYSATVTFFKVKWIFSSVVDLKQTIVPDYRNMIRQGA.

A CH1 region spans residues alanine 1–valine 98. Residues alanine 1–threonine 347 lie on the Extracellular side of the membrane. 3 Ig-like domains span residues proline 6–glutamate 99, proline 118–serine 217, and proline 226–serine 322. Cysteine 27 and cysteine 83 are joined by a disulfide. The segment at glutamate 99–proline 110 is hinge. Positions alanine 111–lysine 220 are CH2. 2 disulfide bridges follow: cysteine 141–cysteine 201 and cysteine 247–cysteine 305. Asparagine 177 carries an N-linked (GlcNAc...) (complex) asparagine glycan. The segment at glycine 221–leucine 327 is CH3. A helical membrane pass occupies residues isoleucine 348–phenylalanine 368. At lysine 369–alanine 396 the chain is on the cytoplasmic side.

Immunoglobulins are composed of two identical heavy chains and two identical light chains; disulfide-linked. Post-translationally, glycosylation on Asn-177 is required for interaction with Fc receptors and ability to activate the complement pathway. In terms of processing, (Microbial infection) Deglycosylation on Asn-177 by S.pyogenes EndoS or Endos2 endoglucosidases prevents interaction between immunoglobulin-gamma (IgG) and Fc receptors, impairing ability to activate the complement pathway.

It localises to the secreted. The protein localises to the cell membrane. Its function is as follows. Constant region of immunoglobulin heavy chains. Immunoglobulins, also known as antibodies, are membrane-bound or secreted glycoproteins produced by B lymphocytes. In the recognition phase of humoral immunity, the membrane-bound immunoglobulins serve as receptors which, upon binding of a specific antigen, trigger the clonal expansion and differentiation of B lymphocytes into immunoglobulins-secreting plasma cells. Secreted immunoglobulins mediate the effector phase of humoral immunity, which results in the elimination of bound antigens. The antigen binding site is formed by the variable domain of one heavy chain, together with that of its associated light chain. Thus, each immunoglobulin has two antigen binding sites with remarkable affinity for a particular antigen. The variable domains are assembled by a process called V-(D)-J rearrangement and can then be subjected to somatic hypermutations which, after exposure to antigen and selection, allow affinity maturation for a particular antigen. In Homo sapiens (Human), this protein is Immunoglobulin heavy constant gamma 4.